The primary structure comprises 273 residues: MSLEEQRTRDELKHKLLDLNQLHEQLAELRTICPSLLKLLHPETGTSRKFEKSAQEAIEKVNSFYTHLKSSQNVFDYAEKSLQADSSNLLPTYLYNSEDLSNDTENNETKSINGKSALDLKEPHHSELHDNDNFQNSDINIESFKGDIEASGSILTTHENKSFTLKLANELEFIFFHDTRGKFSVYCSSSKDDAITFSINRNNNFLGNLWSLMPKILDYQHLYSKPCDFCKSLISPVYLELPSVRRNANSTVKPTSKDILALHAECVPAQSDL.

Belongs to the Mediator complex subunit 27 family. Component of the Mediator complex.

The protein resides in the nucleus. Functionally, component of the Mediator complex, a coactivator involved in the regulated transcription of nearly all RNA polymerase II-dependent genes. Mediator functions as a bridge to convey information from gene-specific regulatory proteins to the basal RNA polymerase II transcription machinery. Mediator is recruited to promoters by direct interactions with regulatory proteins and serves as a scaffold for the assembly of a functional preinitiation complex with RNA polymerase II and the general transcription factors. In Schizosaccharomyces pombe (strain 972 / ATCC 24843) (Fission yeast), this protein is Mediator of RNA polymerase II transcription subunit 27 (med27).